Consider the following 597-residue polypeptide: Inactive metallocarboxypeptidase ECM14 (597 aa).

Positions 1–21 (MRLFTHGQVLALLAFVNTISA) are cleaved as a signal peptide. Residues 22–174 (TPSFSTNSYP…QTIYESYPSP (153 aa)) constitute a propeptide that is removed on maturation. Positions 170 to 179 (SYPSPSQSPS) are enriched in low complexity. A disordered region spans residues 170–189 (SYPSPSQSPSGRERGFLPSG). A Peptidase M14 domain is found at 202-522 (NYQPLSVIVP…NAVMMLGRFL (321 aa)). 2 residues coordinate Zn(2+): His264 and Glu267. Residues 264–267 (HARE), Arg322, and 339–340 (DR) contribute to the substrate site. The cysteines at positions 333 and 356 are disulfide-linked. The N-linked (GlcNAc...) asparagine glycan is linked to Asn349. His396 contacts Zn(2+). 397–398 (SY) is a substrate binding site. A disordered region spans residues 543–597 (KDDKPILNDDDDDDADTNDDGIGRKDDSWIPDEYKGDNDRDESDGGWAFRRLRKR). The span at 550-561 (NDDDDDDADTND) shows a compositional bias: acidic residues. A compositionally biased stretch (basic and acidic residues) spans 563–580 (GIGRKDDSWIPDEYKGDN).

This sequence belongs to the peptidase M14 family. It depends on Zn(2+) as a cofactor.

Its subcellular location is the vacuole. It is found in the secreted. In terms of biological role, inactive carboxypeptidase that may play a role in cell wall organization and biogenesis. The protein is Inactive metallocarboxypeptidase ECM14 (ECM14) of Ajellomyces capsulatus (strain G186AR / H82 / ATCC MYA-2454 / RMSCC 2432) (Darling's disease fungus).